The following is a 265-amino-acid chain: Mlc titration factor A (265 aa).

Positions 111, 148, 152, and 211 each coordinate Zn(2+).

It belongs to the MtfA family. Interacts with Mlc. The cofactor is Zn(2+).

Its subcellular location is the cytoplasm. Functionally, involved in the modulation of the activity of the glucose-phosphotransferase system (glucose-PTS). Interacts with the transcriptional repressor Mlc, preventing its interaction with DNA and leading to the modulation of expression of genes regulated by Mlc, including ptsG, which encodes the PTS system glucose-specific EIICB component. Shows zinc-dependent metallopeptidase activity. The chain is Mlc titration factor A from Shigella sonnei (strain Ss046).